Here is a 364-residue protein sequence, read N- to C-terminus: DNA polymerase IV (364 aa).

The region spanning isoleucine 14–glycine 198 is the UmuC domain. The Mg(2+) site is built by aspartate 18 and aspartate 116. Residue glutamate 117 is part of the active site.

Belongs to the DNA polymerase type-Y family. In terms of assembly, monomer. Requires Mg(2+) as cofactor.

The protein localises to the cytoplasm. The catalysed reaction is DNA(n) + a 2'-deoxyribonucleoside 5'-triphosphate = DNA(n+1) + diphosphate. Poorly processive, error-prone DNA polymerase involved in untargeted mutagenesis. Copies undamaged DNA at stalled replication forks, which arise in vivo from mismatched or misaligned primer ends. These misaligned primers can be extended by PolIV. Exhibits no 3'-5' exonuclease (proofreading) activity. May be involved in translesional synthesis, in conjunction with the beta clamp from PolIII. The polypeptide is DNA polymerase IV (Streptococcus pyogenes serotype M18 (strain MGAS8232)).